Reading from the N-terminus, the 853-residue chain is DNA mismatch repair protein MutS (853 aa).

614-621 (GPNMGGKS) serves as a coordination point for ATP.

Belongs to the DNA mismatch repair MutS family.

This protein is involved in the repair of mismatches in DNA. It is possible that it carries out the mismatch recognition step. This protein has a weak ATPase activity. The polypeptide is DNA mismatch repair protein MutS (Escherichia coli O6:H1 (strain CFT073 / ATCC 700928 / UPEC)).